Reading from the N-terminus, the 145-residue chain is D-aminoacyl-tRNA deacylase (145 aa).

Positions 137-138 (GP) match the Gly-cisPro motif, important for rejection of L-amino acids motif.

Belongs to the DTD family. As to quaternary structure, homodimer.

The protein resides in the cytoplasm. It carries out the reaction glycyl-tRNA(Ala) + H2O = tRNA(Ala) + glycine + H(+). It catalyses the reaction a D-aminoacyl-tRNA + H2O = a tRNA + a D-alpha-amino acid + H(+). An aminoacyl-tRNA editing enzyme that deacylates mischarged D-aminoacyl-tRNAs. Also deacylates mischarged glycyl-tRNA(Ala), protecting cells against glycine mischarging by AlaRS. Acts via tRNA-based rather than protein-based catalysis; rejects L-amino acids rather than detecting D-amino acids in the active site. By recycling D-aminoacyl-tRNA to D-amino acids and free tRNA molecules, this enzyme counteracts the toxicity associated with the formation of D-aminoacyl-tRNA entities in vivo and helps enforce protein L-homochirality. This chain is D-aminoacyl-tRNA deacylase, found in Carboxydothermus hydrogenoformans (strain ATCC BAA-161 / DSM 6008 / Z-2901).